A 471-amino-acid polypeptide reads, in one-letter code: Glutamate--tRNA ligase (471 aa).

Positions 9–19 (PSPTGYLHVGG) match the 'HIGH' region motif. Residues cysteine 98, cysteine 100, cysteine 125, and histidine 127 each contribute to the Zn(2+) site. The 'KMSKS' region signature appears at 237–241 (KLSKR). Lysine 240 contacts ATP.

The protein belongs to the class-I aminoacyl-tRNA synthetase family. Glutamate--tRNA ligase type 1 subfamily. In terms of assembly, monomer. Requires Zn(2+) as cofactor.

It localises to the cytoplasm. The enzyme catalyses tRNA(Glu) + L-glutamate + ATP = L-glutamyl-tRNA(Glu) + AMP + diphosphate. In terms of biological role, catalyzes the attachment of glutamate to tRNA(Glu) in a two-step reaction: glutamate is first activated by ATP to form Glu-AMP and then transferred to the acceptor end of tRNA(Glu). The sequence is that of Glutamate--tRNA ligase from Cronobacter sakazakii (strain ATCC BAA-894) (Enterobacter sakazakii).